The following is a 360-amino-acid chain: NAD(P)H-quinone oxidoreductase subunit 1, chloroplastic (360 aa).

The next 8 helical transmembrane spans lie at 27–47, 98–118, 129–149, 165–185, 203–223, 253–273, 297–317, and 340–360; these read IWIF…VLVI, FSIG…VIPF, IGIF…LMSG, AAQS…ISLL, FWGW…ISSL, FGLF…FVTV, IFGT…FLFV, and FLLP…LFSL.

It belongs to the complex I subunit 1 family. As to quaternary structure, NDH is composed of at least 16 different subunits, 5 of which are encoded in the nucleus.

It localises to the plastid. It is found in the chloroplast thylakoid membrane. The enzyme catalyses a plastoquinone + NADH + (n+1) H(+)(in) = a plastoquinol + NAD(+) + n H(+)(out). The catalysed reaction is a plastoquinone + NADPH + (n+1) H(+)(in) = a plastoquinol + NADP(+) + n H(+)(out). In terms of biological role, NDH shuttles electrons from NAD(P)H:plastoquinone, via FMN and iron-sulfur (Fe-S) centers, to quinones in the photosynthetic chain and possibly in a chloroplast respiratory chain. The immediate electron acceptor for the enzyme in this species is believed to be plastoquinone. Couples the redox reaction to proton translocation, and thus conserves the redox energy in a proton gradient. This chain is NAD(P)H-quinone oxidoreductase subunit 1, chloroplastic, found in Arabidopsis thaliana (Mouse-ear cress).